Consider the following 1227-residue polypeptide: Multifunctional 2-oxoglutarate metabolism enzyme (1227 aa).

Residues 1–41 form a 2-oxoglutarate dehydrogenase E1, N-terminal part region; that stretch reads MSSSPSPFGQNEWLVEEMYRKFRDDPSSVDPSWHEFLVDYS. A compositionally biased stretch (basic and acidic residues) spans 23–37; that stretch reads RDDPSSVDPSWHEFL. The segment at 23–102 is disordered; sequence RDDPSSVDPS…SATPAKGDES (80 aa). The tract at residues 42–88 is linker; that stretch reads PEPTTDSASNGRTTTAAPVTPPTPAPAPAPEPKAAPKPAAKTEAKPA. Residues 43–53 show a composition bias toward polar residues; the sequence is EPTTDSASNGR. Residues 60–76 show a composition bias toward pro residues; it reads VTPPTPAPAPAPEPKAA. Low complexity predominate over residues 88 to 97; that stretch reads AKPAKSATPA. Residues 89–335 form a succinyltransferase E2 region; it reads KPAKSATPAK…LRTIHQLLLD (247 aa). His314 (proton acceptor; for succinyltransferase activity) is an active-site residue. The interval 336–1227 is 2-oxoglutarate dehydrogenase E1, C-terminal part; that stretch reads DDFFDEIFRE…QQEILDTAFG (892 aa). Position 540 (Arg540) interacts with thiamine diphosphate. 2 residues coordinate 2-oxoglutarate: His579 and Ser604. 6 residues coordinate thiamine diphosphate: Ser604, Leu606, Asp645, Ala646, Ala647, and Asn678. Residue Asp645 coordinates Mg(2+). Residues Asn678 and Ile680 each coordinate Mg(2+). Residues 783 to 814 adopt a coiled-coil conformation; the sequence is DISMKEAEDALRDYQGQLERVFNEVRELEKHE. 2-oxoglutarate is bound at residue His1020. Thr1038, Arg1054, Lys1089, Ser1092, Gln1142, Arg1149, and Arg1150 together coordinate acetyl-CoA.

This sequence belongs to the 2-oxoacid dehydrogenase family. Kgd subfamily. In terms of assembly, homodimer. Interacts with the FHA domain of unphosphorylated GarA. The 2-oxoglutarate dehydrogenase (ODH) complex contains multiple copies of three enzymatic components: 2-oxoglutarate dehydrogenase (E1), dihydrolipoamide succinyltransferase (E2) and lipoamide dehydrogenase (E3). Mg(2+) is required as a cofactor. Thiamine diphosphate serves as cofactor.

It catalyses the reaction glyoxylate + 2-oxoglutarate + H(+) = 2-hydroxy-3-oxoadipate + CO2. It carries out the reaction 2-oxoglutarate + H(+) = succinate semialdehyde + CO2. The catalysed reaction is N(6)-[(R)-lipoyl]-L-lysyl-[protein] + 2-oxoglutarate + H(+) = N(6)-[(R)-S(8)-succinyldihydrolipoyl]-L-lysyl-[protein] + CO2. The enzyme catalyses N(6)-[(R)-dihydrolipoyl]-L-lysyl-[protein] + succinyl-CoA = N(6)-[(R)-S(8)-succinyldihydrolipoyl]-L-lysyl-[protein] + CoA. Its pathway is carbohydrate metabolism; tricarboxylic acid cycle; succinate from 2-oxoglutarate (transferase route): step 1/2. The protein operates within carbohydrate metabolism; tricarboxylic acid cycle; succinyl-CoA from 2-oxoglutarate (dehydrogenase route): step 1/1. With respect to regulation, alpha-ketoglutarate dehydrogenase and decarboxylase activities are inhibited by unphosphorylated GarA, and allosterically activated by acetyl-CoA, the main substrate of the TCA cycle. Both the phosphoadenosine and acetyl moieties of acetyl-CoA are important for activation because neither CoA nor the synthetic compound S-(2-acetamidoethyl)-ethanethioate (which mimics the terminal acetyl-phosphopantetheine group of acetyl-CoA) has an activation effect. Functionally, shows three enzymatic activities that share a first common step, the attack of thiamine-PP on 2-oxoglutarate (alpha-ketoglutarate, KG), leading to the formation of an enamine-thiamine-PP intermediate upon decarboxylation. Thus, displays KGD activity, catalyzing the decarboxylation from five-carbon 2-oxoglutarate to four-carbon succinate semialdehyde (SSA). Also catalyzes C-C bond formation between the activated aldehyde formed after decarboxylation of alpha-ketoglutarate and the carbonyl of glyoxylate (GLX), to yield 2-hydroxy-3-oxoadipate (HOA), which spontaneously decarboxylates to form 5-hydroxylevulinate (HLA). And is also a component of the 2-oxoglutarate dehydrogenase (ODH) complex, that catalyzes the overall conversion of 2-oxoglutarate to succinyl-CoA and CO(2). The KG decarboxylase and KG dehydrogenase reactions provide two alternative, tightly regulated, pathways connecting the oxidative and reductive branches of the TCA cycle. This is Multifunctional 2-oxoglutarate metabolism enzyme (kgd) from Mycolicibacterium smegmatis (strain ATCC 700084 / mc(2)155) (Mycobacterium smegmatis).